The primary structure comprises 574 residues: Interactor of HORMAD1 protein 1 (574 aa).

The interval Gly113–Thr133 is disordered. The span at Gln117–Asp127 shows a compositional bias: basic and acidic residues. A coiled-coil region spans residues Met217 to Phe240. Disordered stretches follow at residues Gly267–Asp324, Phe372–Gln393, and Thr426–Gln457. The segment covering Ser272–Leu284 has biased composition (low complexity). A compositionally biased stretch (polar residues) spans Phe372–Gly381. Over residues Arg431–Arg449 the composition is skewed to basic residues. Phosphoserine is present on residues Ser476, Ser569, and Ser570.

Part of the MCD recombinosome complex, at least composed of IHO1, REC114 and MEI4. Interacts with REC114. Interacts with MEI4. Interacts with HORMAD1. Interacts with ANKRD31. As to expression, detected in spermatocytes and testis (at protein level).

It is found in the chromosome. Functionally, required for DNA double-strand breaks (DSBs) formation in unsynapsed regions during meiotic recombination. Probably acts by forming a complex with MEI4 and REC114, which activates DSBs formation in unsynapsed regions, an essential step to ensure completion of synapsis. Not required for HORMAD1 functions in pairing-independent synaptonemal complex formation, ATR recruitment to unsynapsed axes, meiotic silencing of unsynapsed chromatin (MSUC) or meiotic surveillance. This is Interactor of HORMAD1 protein 1 from Mus musculus (Mouse).